The chain runs to 174 residues: Shikimate kinase 2 (174 aa).

An ATP-binding site is contributed by 12 to 17; that stretch reads GCGKTT. Mg(2+) is bound by residues Thr-16 and Asp-32. Substrate is bound by residues Asp-34, Arg-58, and Gly-79. Residues 112–126 are LID domain; that stretch reads RAYPEDDQRPSLTGK. Residue Arg-120 coordinates ATP. A substrate-binding site is contributed by Arg-139. Gln-155 lines the ATP pocket.

The protein belongs to the shikimate kinase family. AroL subfamily. As to quaternary structure, monomer. Requires Mg(2+) as cofactor.

It is found in the cytoplasm. The enzyme catalyses shikimate + ATP = 3-phosphoshikimate + ADP + H(+). It functions in the pathway metabolic intermediate biosynthesis; chorismate biosynthesis; chorismate from D-erythrose 4-phosphate and phosphoenolpyruvate: step 5/7. Catalyzes the specific phosphorylation of the 3-hydroxyl group of shikimic acid using ATP as a cosubstrate. The protein is Shikimate kinase 2 of Sodalis glossinidius (strain morsitans).